Here is a 212-residue protein sequence, read N- to C-terminus: Uridine kinase (212 aa).

13-20 provides a ligand contact to ATP; that stretch reads GASASGKS.

The protein belongs to the uridine kinase family.

It is found in the cytoplasm. The catalysed reaction is uridine + ATP = UMP + ADP + H(+). The enzyme catalyses cytidine + ATP = CMP + ADP + H(+). It functions in the pathway pyrimidine metabolism; CTP biosynthesis via salvage pathway; CTP from cytidine: step 1/3. It participates in pyrimidine metabolism; UMP biosynthesis via salvage pathway; UMP from uridine: step 1/1. The chain is Uridine kinase from Shewanella baltica (strain OS155 / ATCC BAA-1091).